An 803-amino-acid chain; its full sequence is Myb-like protein V (803 aa).

Disordered regions lie at residues 237-333 and 429-803; these read SNIY…LPGL and KSTS…SRRK. A coiled-coil region spans residues 258–323; it reads DANDKNENNN…ENNKNKRTKS (66 aa). Over residues 271–294 the composition is skewed to acidic residues; it reads DDADDAAADDADDADDDDMDDESD. Residues 295–315 show a composition bias toward low complexity; the sequence is SNNNNKNSNNKNSNNKNSNEN. The region spanning 332 to 379 is the Myb-like domain; it reads GLWTDEECRSLIKAVMIIGHRWIKIKEDYYSTSKRKPSQLKDKMRSLR. Coiled coils occupy residues 400 to 429 and 463 to 496; these read EIEKLAVLFQQKEEAQKLAKEKIDSLSNIK and NNEDNQNESESENEDENDNNEKEKEKRNKKNSAV. Over residues 429 to 438 the composition is skewed to polar residues; the sequence is KSTSNTSAAS. 2 stretches are compositionally biased toward acidic residues: residues 448-480 and 510-533; these read NDSDEEVDQDSDNDSNNEDNQNESESENEDEND and EEEESDEEHNDSEEDSQEDSEENE. 2 stretches are compositionally biased toward basic residues: residues 537–553 and 568–577; these read KQKRKSNQIKSSPKKLK and HKSKLKSKPQ. The stretch at 573–616 forms a coiled coil; sequence KSKPQRKVEKEESEKEESEEEESEEEEEEDDEDYESEEDKKKKK. A compositionally biased stretch (acidic residues) spans 586–609; sequence EKEESEEEESEEEEEEDDEDYESE. Low complexity-rich tracts occupy residues 625–636 and 666–733; these read TSTHTTTTTTTT and KKSN…PTKK. Residues 786 to 795 show a composition bias toward basic and acidic residues; that stretch reads LNKDSKENKK.

The chain is Myb-like protein V (mybV) from Dictyostelium discoideum (Social amoeba).